A 299-amino-acid polypeptide reads, in one-letter code: Large ribosomal subunit protein uL29m (299 aa).

Belongs to the universal ribosomal protein uL29 family. As to quaternary structure, component of the mitochondrial large ribosomal subunit. Mature mitochondrial ribosomes consist of a small (37S) and a large (54S) subunit. The 37S subunit contains at least 33 different proteins and 1 molecule of RNA (15S). The 54S subunit contains at least 45 different proteins and 1 molecule of RNA (21S).

It localises to the mitochondrion. The chain is Large ribosomal subunit protein uL29m (MRPL4) from Scheffersomyces stipitis (strain ATCC 58785 / CBS 6054 / NBRC 10063 / NRRL Y-11545) (Yeast).